The following is a 225-amino-acid chain: Small ribosomal subunit protein uS3 (225 aa).

The region spanning 38-106 (LRGHLRKKLS…DVALNIVEIR (69 aa)) is the KH type-2 domain.

The protein belongs to the universal ribosomal protein uS3 family. Part of the 30S ribosomal subunit. Forms a tight complex with proteins S10 and S14.

Its function is as follows. Binds the lower part of the 30S subunit head. Binds mRNA in the 70S ribosome, positioning it for translation. The protein is Small ribosomal subunit protein uS3 of Granulibacter bethesdensis (strain ATCC BAA-1260 / CGDNIH1).